A 326-amino-acid chain; its full sequence is ELAV-like protein 1-B (326 aa).

3 consecutive RRM domains span residues threonine 20 to proline 98, alanine 106 to asparagine 186, and tryptophan 244 to serine 322.

This sequence belongs to the RRM elav family. Interacts (via RRM3) with cirbp. Unable to form oligomers. Part of a ribonucleoprotein (RNP) complex, at least composed of elavl1/elrA and/or elavl2/elrB, igf2bp3/vg1RBP, ddx6/Xp54, ybx2/frgy2, lsm14b/rap55b and, in a subset of RNP complexes, stau1/staufen.

It localises to the cytoplasm. The protein localises to the cell cortex. Functionally, RNA-binding protein that binds to the 3'-UTR region of mRNAs and increases their stability. Involved in embryonic stem cells (ESCs) differentiation: preferentially binds mRNAs that are not methylated by N6-methyladenosine (m6A), stabilizing them, promoting ESCs differentiation. Binds to poly-U elements and AU-rich elements (AREs) in the 3'-UTR of target mRNAs. Acts cooperatively with cribp to stabilize AU-rich sequence (ARE)-containing mRNAs. May play a role during gastrulation. Required for the vegetal localization of vg1 mRNA. The sequence is that of ELAV-like protein 1-B (elavl1-b) from Xenopus laevis (African clawed frog).